A 253-amino-acid chain; its full sequence is ATP synthase subunit b 2 (253 aa).

A helical membrane pass occupies residues 9-27; it reads VLEIVNFLVLVWLLKRFLY.

This sequence belongs to the ATPase B chain family. In terms of assembly, F-type ATPases have 2 components, F(1) - the catalytic core - and F(0) - the membrane proton channel. F(1) has five subunits: alpha(3), beta(3), gamma(1), delta(1), epsilon(1). F(0) has three main subunits: a(1), b(2) and c(10-14). The alpha and beta chains form an alternating ring which encloses part of the gamma chain. F(1) is attached to F(0) by a central stalk formed by the gamma and epsilon chains, while a peripheral stalk is formed by the delta and b chains.

The protein localises to the cell inner membrane. Its function is as follows. F(1)F(0) ATP synthase produces ATP from ADP in the presence of a proton or sodium gradient. F-type ATPases consist of two structural domains, F(1) containing the extramembraneous catalytic core and F(0) containing the membrane proton channel, linked together by a central stalk and a peripheral stalk. During catalysis, ATP synthesis in the catalytic domain of F(1) is coupled via a rotary mechanism of the central stalk subunits to proton translocation. Functionally, component of the F(0) channel, it forms part of the peripheral stalk, linking F(1) to F(0). This is ATP synthase subunit b 2 from Methylococcus capsulatus (strain ATCC 33009 / NCIMB 11132 / Bath).